The following is a 406-amino-acid chain: Glutamyl-tRNA(Gln) amidotransferase subunit D (406 aa).

One can recognise an Asparaginase/glutaminase domain in the interval 68 to 390; that stretch reads KSISILATGG…EEFINVFNRN (323 aa). Active-site residues include T78, T152, D153, and K230.

This sequence belongs to the asparaginase 1 family. GatD subfamily. As to quaternary structure, heterodimer of GatD and GatE.

It catalyses the reaction L-glutamyl-tRNA(Gln) + L-glutamine + ATP + H2O = L-glutaminyl-tRNA(Gln) + L-glutamate + ADP + phosphate + H(+). Its function is as follows. Allows the formation of correctly charged Gln-tRNA(Gln) through the transamidation of misacylated Glu-tRNA(Gln) in organisms which lack glutaminyl-tRNA synthetase. The reaction takes place in the presence of glutamine and ATP through an activated gamma-phospho-Glu-tRNA(Gln). The GatDE system is specific for glutamate and does not act on aspartate. The sequence is that of Glutamyl-tRNA(Gln) amidotransferase subunit D from Thermoplasma volcanium (strain ATCC 51530 / DSM 4299 / JCM 9571 / NBRC 15438 / GSS1).